A 65-amino-acid chain; its full sequence is MDWLSKYWWILVLVFLVGVLLNVIKDLKRVDHKKFLANKPELPPHRDFNDKWDDDDNWPKKDQKK.

The helical transmembrane segment at 4 to 24 (LSKYWWILVLVFLVGVLLNVI) threads the bilayer. A disordered region spans residues 39-65 (KPELPPHRDFNDKWDDDDNWPKKDQKK). A compositionally biased stretch (basic and acidic residues) spans 42-65 (LPPHRDFNDKWDDDDNWPKKDQKK).

The protein belongs to the UPF0370 family.

The protein localises to the cell membrane. This chain is UPF0370 protein Ent638_2968, found in Enterobacter sp. (strain 638).